The sequence spans 372 residues: Small ribosomal subunit protein mS77 (rPPR2) (372 aa).

A mitochondrion-targeting transit peptide spans Met-1–Phe-28. The disordered stretch occupies residues Asp-240 to Glu-265. A compositionally biased stretch (acidic residues) spans Thr-248–Gly-257.

As to quaternary structure, component of the mitochondrial ribosome small subunit.

The protein resides in the mitochondrion. Functionally, required for karyogamy during female gametophyte development, when the two polar nuclei fuse to form the diploid central cell nucleus. The chain is Small ribosomal subunit protein mS77 (rPPR2) from Arabidopsis thaliana (Mouse-ear cress).